The chain runs to 613 residues: Portal protein (613 aa).

Residues 577–613 (ATGGDHGIRQAPSARGDAEPDHAKSKPARDPPPGAGS) are disordered. Over residues 592–605 (GDAEPDHAKSKPAR) the composition is skewed to basic and acidic residues.

This sequence belongs to the herpesviridae portal protein family. As to quaternary structure, homododecamerizes. Interacts with terminase subunits TRM1 and TRM3.

It localises to the virion. The protein localises to the host nucleus. In terms of biological role, forms a portal in the viral capsid through which viral DNA is translocated during DNA packaging. Assembles as a dodecamer at a single fivefold axe of the T=16 icosahedric capsid. Binds to the molecular motor that translocates the viral DNA, termed terminase. The sequence is that of Portal protein from Homo sapiens (Human).